Here is a 1169-residue protein sequence, read N- to C-terminus: DNA repair protein RAD5 (1169 aa).

Ser-2 carries the N-acetylserine modification. 4 positions are modified to phosphoserine: Ser-20, Ser-23, Ser-129, and Ser-130. The segment covering 302–317 (MKRRRTEGGNKREKDN) has biased composition (basic and acidic residues). The tract at residues 302-327 (MKRRRTEGGNKREKDNGNFGRTLTET) is disordered. The Helicase ATP-binding domain occupies 519 to 730 (PILKTMIKGG…YSLVKFLELD (212 aa)). 532–539 (DEMGLGKT) provides a ligand contact to ATP. A DEGH box motif is present at residues 681 to 684 (DEGH). Residues 914–961 (CSICTTEPMDLDKALFTECGHSFCEKCLFEYIEFQNSKNLGLKCPNCR) form an RING-type zinc finger. A Helicase C-terminal domain is found at 995-1165 (KITALLKELQ…RRKRRIEEIQ (171 aa)).

It belongs to the SNF2/RAD54 helicase family. In terms of assembly, homodimer. Interacts with POL30, RAD18, UBC9 and UBC13. It depends on Mg(2+) as a cofactor. Mn(2+) is required as a cofactor. Ca(2+) serves as cofactor.

The protein localises to the cytoplasm. Its subcellular location is the nucleus. Functionally, probable helicase, member of the UBC2/RAD6 epistasis group. Functions with the DNA repair protein RAD18 in error-free postreplication DNA repair. Involved in the maintenance of wild-type rates of instability of simple repetitive sequences such as poly(GT) repeats. Seems to be involved in maintaining a balance which acts in favor of error-prone non-homologous joining during DNA double-strand breaks repairs. Recruits the UBC13-MMS2 dimer to chromatin for DNA repair. In Saccharomyces cerevisiae (strain ATCC 204508 / S288c) (Baker's yeast), this protein is DNA repair protein RAD5 (RAD5).